We begin with the raw amino-acid sequence, 212 residues long: Thymidylate kinase (212 aa).

11–18 serves as a coordination point for ATP; it reads GMEGAGKS.

It belongs to the thymidylate kinase family.

It catalyses the reaction dTMP + ATP = dTDP + ADP. In terms of biological role, phosphorylation of dTMP to form dTDP in both de novo and salvage pathways of dTTP synthesis. The sequence is that of Thymidylate kinase from Colwellia psychrerythraea (strain 34H / ATCC BAA-681) (Vibrio psychroerythus).